A 67-amino-acid polypeptide reads, in one-letter code: Kappa-conotoxin-like 2 (67 aa).

Residues 1-26 (MMFRLTSVSCFLLVIACLNLFQVVLT) form the signal peptide. 4 disulfide bridges follow: cysteine 29/cysteine 43, cysteine 36/cysteine 48, cysteine 42/cysteine 51, and cysteine 47/cysteine 55. Phenylalanine amide is present on phenylalanine 59. Positions 63 to 67 (ATFQE) are excised as a propeptide.

This sequence belongs to the conotoxin I2 superfamily. In terms of tissue distribution, expressed by the venom duct.

The protein localises to the secreted. Functionally, inhibits the vertebrate voltage-gated potassium channels Kv1.1/KCNA1 and Kv1.3/KCNA3. This is Kappa-conotoxin-like 2 from Conus vexillum (Flag cone).